Consider the following 235-residue polypeptide: Sugar fermentation stimulation protein homolog (235 aa).

Belongs to the SfsA family.

In Bartonella henselae (strain ATCC 49882 / DSM 28221 / CCUG 30454 / Houston 1) (Rochalimaea henselae), this protein is Sugar fermentation stimulation protein homolog.